We begin with the raw amino-acid sequence, 392 residues long: S-adenosylmethionine synthase (392 aa).

His17 lines the ATP pocket. Mg(2+) is bound at residue Asp19. Glu45 provides a ligand contact to K(+). L-methionine is bound by residues Glu58 and Gln102. Residues 102-112 (QSADIAQGVDA) are flexible loop. ATP is bound by residues 169–171 (DAK), 235–236 (KF), Asp244, 250–251 (RK), Ala267, and Lys271. Asp244 contributes to the L-methionine binding site. Lys275 is an L-methionine binding site.

The protein belongs to the AdoMet synthase family. Homotetramer; dimer of dimers. Requires Mg(2+) as cofactor. The cofactor is K(+).

The protein resides in the cytoplasm. It carries out the reaction L-methionine + ATP + H2O = S-adenosyl-L-methionine + phosphate + diphosphate. Its pathway is amino-acid biosynthesis; S-adenosyl-L-methionine biosynthesis; S-adenosyl-L-methionine from L-methionine: step 1/1. Functionally, catalyzes the formation of S-adenosylmethionine (AdoMet) from methionine and ATP. The overall synthetic reaction is composed of two sequential steps, AdoMet formation and the subsequent tripolyphosphate hydrolysis which occurs prior to release of AdoMet from the enzyme. The protein is S-adenosylmethionine synthase of Methylobacterium sp. (strain 4-46).